Consider the following 205-residue polypeptide: High frequency lysogenization protein HflD homolog (205 aa).

It belongs to the HflD family.

The protein resides in the cytoplasm. It localises to the cell inner membrane. This is High frequency lysogenization protein HflD homolog from Haemophilus influenzae (strain PittEE).